A 525-amino-acid polypeptide reads, in one-letter code: Arabinose import ATP-binding protein AraG 2 (525 aa).

A disordered region spans residues 1–25 (MTDTTIRARGAQAAGSPAGAGPLDA). Over residues 7-25 (RARGAQAAGSPAGAGPLDA) the composition is skewed to low complexity. ABC transporter domains lie at 35-270 (LELD…MVGR) and 281-524 (REPG…LALP). An ATP-binding site is contributed by 67 to 74 (GENGAGKS).

The protein belongs to the ABC transporter superfamily. Arabinose importer (TC 3.A.1.2.2) family. In terms of assembly, the complex is composed of two ATP-binding proteins (AraG), two transmembrane proteins (AraH) and a solute-binding protein (AraF).

The protein resides in the cell inner membrane. It catalyses the reaction L-arabinose(out) + ATP + H2O = L-arabinose(in) + ADP + phosphate + H(+). In terms of biological role, part of the ABC transporter complex AraFGH involved in arabinose import. Responsible for energy coupling to the transport system. This is Arabinose import ATP-binding protein AraG 2 from Burkholderia thailandensis (strain ATCC 700388 / DSM 13276 / CCUG 48851 / CIP 106301 / E264).